The following is a 50-amino-acid chain: Defensin-like protein 1 (50 aa).

4 cysteine pairs are disulfide-bonded: Cys2-Cys50, Cys14-Cys35, Cys20-Cys44, and Cys24-Cys46.

It belongs to the DEFL family.

Its subcellular location is the secreted. Its function is as follows. Possesses antimicrobial activity sensitive to inorganic cations. Binds specifically to the fungal plasma membrane. Has no inhibitory effect on insect gut alpha-amylase. The protein is Defensin-like protein 1 of Aesculus hippocastanum (Horse chestnut).